The sequence spans 115 residues: MNVCCSSHPVNEKVWKPSSRKWSSKVWSMDEFDLQTACYWFMTRCQKEAGKFGTHRGKPMCFVRSLLRVQLLPRTFPANSFVISFFPSLIYPLQVYQLHFESSDKQRAMQFVTEG.

This is an uncharacterized protein from Homo sapiens (Human).